A 190-amino-acid polypeptide reads, in one-letter code: Jupiter microtubule associated homolog 2 (190 aa).

At methionine 1 the chain carries N-acetylmethionine. Over residues methionine 1–arginine 15 the composition is skewed to polar residues. The tract at residues methionine 1–tyrosine 190 is disordered. Lysine 11 bears the N6-acetyllysine mark. Serine 30 carries the post-translational modification Phosphoserine. Positions isoleucine 35–alanine 44 are enriched in polar residues. Phosphoserine occurs at positions 45, 69, and 97. Basic and acidic residues-rich tracts occupy residues lysine 110 to alanine 129 and glutamate 138 to isoleucine 153. Serine 144 bears the Phosphoserine mark.

This sequence belongs to the JUPITER family. Monomer. Dimer. Interacts with TPCN1.

It localises to the cytoplasm. It is found in the nucleus. In terms of biological role, nicotinic acid adenine dinucleotide phosphate (NAADP) binding protein required for NAADP-evoked intracellular calcium release. Confers NAADP-sensitivity to the two pore channels (TPCs) complex. Enables NAADP to activate Ca(2+) release from the endoplasmic reticulum through ryanodine receptors. The sequence is that of Jupiter microtubule associated homolog 2 from Mus musculus (Mouse).